The sequence spans 436 residues: Cytochrome P450 monooxygenase phqO (436 aa).

Cysteine 377 contributes to the heme binding site.

The protein belongs to the cytochrome P450 family. Requires heme as cofactor.

Its pathway is alkaloid biosynthesis. Functionally, cytochrome P450 monooxygenase; part of the gene cluster that mediates the biosynthesis of paraherquamide, a fungal indole alkaloid that belongs to a family of natural products containing a characteristic bicyclo[2.2.2]diazaoctane core. The first steps in the biosynthesis of paraherquamide is the production of the beta-methyl-proline precursor from L-isoleucine. They require oxidation of a terminally hydroxylated L-isoleucine to the corresponding aldehyde by enzymes which have still to be identified. Spontaneous cyclization and dehydration would yield the 4-methyl pyrolline-5-carboxylic acid, which is then reduced by the pyrroline-5-carboxylate reductase phqD leading to the beta-methyl-proline precursor. The next step of paraherquamide biosynthesis involves coupling of beta-methyl-proline and L-tryptophan by the bimodular NRPS phqB, to produce a monooxopiperazine intermediate. The reductase (R) domain of phqB utilizes NADPH for hydride transfer to reduce the thioester bond of the T domain-tethered linear dipeptide to a hemithioaminal intermediate, which spontaneously cleaves the C-S bond to release the aldehyde product. This compound undergoes spontaneous cyclization and dehydration to give a dienamine which is reverse prenylated at C-2 by the reverse prenyltransferase phqJ. The other prenyltransferase present in the cluster, phqI may be a redundant gene in the pathway. During biosynthetic assembly, the key step to produce the polycyclic core is catalyzed by the bifunctional reductase and intramolecular [4+2] Diels-Alderase, phqE, resulting in formation of the [2.2.2] diazaoctane intermediate preparaherquamide. Following formation of preparaherquamide, an indole 2,3-epoxidation-initiated pinacol-like rearrangement is catalyzed by the phqK FAD-dependent monooxygenase. The prenyltransferase phqA, the cytochrome P450 monooxygenase phqL, and the FAD-linked oxidoreductase phqH (or the cytochrome P450 monooxygenase phqM), are proposed to be involved in the formation of the pyran ring. The FAD-dependent monooxygenase phqK is likely responsible for generation of the spiro-oxindole, and the N-methylation is likely mediated by the phqN methyltransferase leading to the isolable natural product paraherquamide F. However, the order of these biosynthetic steps has still to be determined. In late-stage paraherquamide biosynthesis, the third P450 monooxygenase, phqO, is probably responsible for the C-14 hydroxylation, transforming paraherquamide F to paraherquamide G, and paraherquamide E to the final product paraherquamide A. The expansion from the 6-membered ring pyran (in paraherquamides F and G) to the 7-membered dioxepin ring (in paraherquamides A and E) represents a poorly understood but intriguing process that probably involves the 2-oxoglutarate-dependent dioxygenase phqC. Finally, the remaining members of the paraherquamide cluster, including phqI as well as phqM (or phqH), do not have a clearly prescribed role and appear to be redundant. This is Cytochrome P450 monooxygenase phqO from Penicillium fellutanum.